Reading from the N-terminus, the 333-residue chain is Protoheme IX farnesyltransferase (333 aa).

The next 8 membrane-spanning stretches (helical) occupy residues 31–51 (VMSL…APIH), 52–72 (PVLA…SGAL), 115–135 (MFLG…TIVF), 152–172 (IVIG…AATG), 178–198 (AWLM…ALSL), 223–243 (KQIL…VLTG), 244–264 (LGGP…LLLA), and 303–323 (LFAF…GEAV).

The protein belongs to the UbiA prenyltransferase family. Protoheme IX farnesyltransferase subfamily.

The protein resides in the cell inner membrane. It catalyses the reaction heme b + (2E,6E)-farnesyl diphosphate + H2O = Fe(II)-heme o + diphosphate. Its pathway is porphyrin-containing compound metabolism; heme O biosynthesis; heme O from protoheme: step 1/1. Functionally, converts heme B (protoheme IX) to heme O by substitution of the vinyl group on carbon 2 of heme B porphyrin ring with a hydroxyethyl farnesyl side group. This Caulobacter vibrioides (strain ATCC 19089 / CIP 103742 / CB 15) (Caulobacter crescentus) protein is Protoheme IX farnesyltransferase.